The primary structure comprises 257 residues: 1-(5-phosphoribosyl)-5-[(5-phosphoribosylamino)methylideneamino] imidazole-4-carboxamide isomerase (257 aa).

D8 functions as the Proton acceptor in the catalytic mechanism. D129 serves as the catalytic Proton donor.

This sequence belongs to the HisA/HisF family.

The protein localises to the cytoplasm. The catalysed reaction is 1-(5-phospho-beta-D-ribosyl)-5-[(5-phospho-beta-D-ribosylamino)methylideneamino]imidazole-4-carboxamide = 5-[(5-phospho-1-deoxy-D-ribulos-1-ylimino)methylamino]-1-(5-phospho-beta-D-ribosyl)imidazole-4-carboxamide. The protein operates within amino-acid biosynthesis; L-histidine biosynthesis; L-histidine from 5-phospho-alpha-D-ribose 1-diphosphate: step 4/9. The chain is 1-(5-phosphoribosyl)-5-[(5-phosphoribosylamino)methylideneamino] imidazole-4-carboxamide isomerase from Gloeothece citriformis (strain PCC 7424) (Cyanothece sp. (strain PCC 7424)).